Consider the following 786-residue polypeptide: Polyribonucleotide nucleotidyltransferase (786 aa).

Residues Asp-516 and Asp-522 each coordinate Mg(2+). One can recognise a KH domain in the interval 582 to 641 (PRVTTVKIPVDKIGMVIGPKGQTINAIQDETGAEISIEDDGTIYVGATNGPSAQAAVERV). In terms of domain architecture, S1 motif spans 653 to 722 (GDRFLGTVVK…QRGKIYLDKV (70 aa)). A disordered region spans residues 722–786 (VRPEGAEGPA…SRPRRRTRHS (65 aa)). Positions 727–738 (AEGPAEAAATDR) are enriched in low complexity. Positions 739–778 (PAGRDRGDRAPRDRGDRGDRERGSRGPDRGDGGEGGGESR) are enriched in basic and acidic residues.

Belongs to the polyribonucleotide nucleotidyltransferase family. The cofactor is Mg(2+).

Its subcellular location is the cytoplasm. It catalyses the reaction RNA(n+1) + phosphate = RNA(n) + a ribonucleoside 5'-diphosphate. Functionally, involved in mRNA degradation. Catalyzes the phosphorolysis of single-stranded polyribonucleotides processively in the 3'- to 5'-direction. The protein is Polyribonucleotide nucleotidyltransferase of Salinispora arenicola (strain CNS-205).